A 403-amino-acid polypeptide reads, in one-letter code: Acetylornithine aminotransferase (403 aa).

Residues 101 to 102 (GA) and Phe134 each bind pyridoxal 5'-phosphate. A N(2)-acetyl-L-ornithine-binding site is contributed by Arg137. 219 to 222 (DEVQ) serves as a coordination point for pyridoxal 5'-phosphate. Lys248 carries the post-translational modification N6-(pyridoxal phosphate)lysine. Thr276 serves as a coordination point for N(2)-acetyl-L-ornithine. A pyridoxal 5'-phosphate-binding site is contributed by Thr277.

It belongs to the class-III pyridoxal-phosphate-dependent aminotransferase family. ArgD subfamily. Homodimer. Pyridoxal 5'-phosphate serves as cofactor.

Its subcellular location is the cytoplasm. It catalyses the reaction N(2)-acetyl-L-ornithine + 2-oxoglutarate = N-acetyl-L-glutamate 5-semialdehyde + L-glutamate. The protein operates within amino-acid biosynthesis; L-arginine biosynthesis; N(2)-acetyl-L-ornithine from L-glutamate: step 4/4. The polypeptide is Acetylornithine aminotransferase (Brucella melitensis biotype 1 (strain ATCC 23456 / CCUG 17765 / NCTC 10094 / 16M)).